The primary structure comprises 901 residues: Valine--tRNA ligase (901 aa).

Positions 536–540 match the 'KMSKS' region motif; that stretch reads KLSKS. ATP is bound at residue lysine 539. A coiled-coil region spans residues 831 to 901; the sequence is LEGLISFEKE…KLQGNLEVLS (71 aa).

Belongs to the class-I aminoacyl-tRNA synthetase family. ValS type 1 subfamily. Monomer.

The protein localises to the cytoplasm. It catalyses the reaction tRNA(Val) + L-valine + ATP = L-valyl-tRNA(Val) + AMP + diphosphate. Catalyzes the attachment of valine to tRNA(Val). As ValRS can inadvertently accommodate and process structurally similar amino acids such as threonine, to avoid such errors, it has a 'posttransfer' editing activity that hydrolyzes mischarged Thr-tRNA(Val) in a tRNA-dependent manner. This Chlorobaculum tepidum (strain ATCC 49652 / DSM 12025 / NBRC 103806 / TLS) (Chlorobium tepidum) protein is Valine--tRNA ligase.